The chain runs to 360 residues: Biotin synthase 2 (360 aa).

The 228-residue stretch at 53–280 (RRVKLNFLVN…TAEVRLSGGR (228 aa)) folds into the Radical SAM core domain. [4Fe-4S] cluster contacts are provided by Cys68, Cys72, and Cys75. Cys112, Cys145, Cys205, and Arg275 together coordinate [2Fe-2S] cluster.

It belongs to the radical SAM superfamily. Biotin synthase family. As to quaternary structure, homodimer. [4Fe-4S] cluster is required as a cofactor. It depends on [2Fe-2S] cluster as a cofactor.

It catalyses the reaction (4R,5S)-dethiobiotin + (sulfur carrier)-SH + 2 reduced [2Fe-2S]-[ferredoxin] + 2 S-adenosyl-L-methionine = (sulfur carrier)-H + biotin + 2 5'-deoxyadenosine + 2 L-methionine + 2 oxidized [2Fe-2S]-[ferredoxin]. It participates in cofactor biosynthesis; biotin biosynthesis; biotin from 7,8-diaminononanoate: step 2/2. In terms of biological role, catalyzes the conversion of dethiobiotin (DTB) to biotin by the insertion of a sulfur atom into dethiobiotin via a radical-based mechanism. In Frankia casuarinae (strain DSM 45818 / CECT 9043 / HFP020203 / CcI3), this protein is Biotin synthase 2.